Here is a 387-residue protein sequence, read N- to C-terminus: Phosphoglycerate kinase (387 aa).

Substrate-binding positions include 21 to 23, arginine 36, 59 to 62, arginine 113, and arginine 146; these read DLN and HLGR. Residues lysine 197, glutamate 314, and 340–343 contribute to the ATP site; that span reads GGDT.

The protein belongs to the phosphoglycerate kinase family. In terms of assembly, monomer.

It localises to the cytoplasm. It carries out the reaction (2R)-3-phosphoglycerate + ATP = (2R)-3-phospho-glyceroyl phosphate + ADP. It functions in the pathway carbohydrate degradation; glycolysis; pyruvate from D-glyceraldehyde 3-phosphate: step 2/5. The sequence is that of Phosphoglycerate kinase from Aliivibrio fischeri (strain MJ11) (Vibrio fischeri).